The primary structure comprises 164 residues: Proline-rich protein 2 (164 aa).

The signal sequence occupies residues 1–21 (MNLKVGIAVLIIALIVPSAQP).

In terms of tissue distribution, component of the acid-soluble organic matrix of calcified layers of the shell (at protein level).

Its subcellular location is the secreted. The protein is Proline-rich protein 2 of Lottia gigantea (Giant owl limpet).